The sequence spans 392 residues: Tyrosine--tRNA ligase (392 aa).

Positions 41 to 50 (PTAPDLHLGH) match the 'HIGH' region motif. The 'KMSKS' region motif lies at 225-229 (KMSKS). K228 lines the ATP pocket. The 61-residue stretch at 330 to 390 (LRAVDFLVKI…VGKKKFYRVV (61 aa)) folds into the S4 RNA-binding domain.

The protein belongs to the class-I aminoacyl-tRNA synthetase family. TyrS type 2 subfamily. As to quaternary structure, homodimer.

It localises to the cytoplasm. It carries out the reaction tRNA(Tyr) + L-tyrosine + ATP = L-tyrosyl-tRNA(Tyr) + AMP + diphosphate + H(+). In terms of biological role, catalyzes the attachment of tyrosine to tRNA(Tyr) in a two-step reaction: tyrosine is first activated by ATP to form Tyr-AMP and then transferred to the acceptor end of tRNA(Tyr). The protein is Tyrosine--tRNA ligase of Aquifex aeolicus (strain VF5).